A 583-amino-acid polypeptide reads, in one-letter code: Phosphoglucomutase, cytoplasmic (583 aa).

Residues Met1–Gly20 are disordered. Residues Arg25 and Ser124 each contribute to the alpha-D-glucose 1,6-bisphosphate site. Catalysis depends on Ser124, which acts as the Phosphoserine intermediate. Positions 124, 300, 302, and 304 each coordinate Mg(2+). Phosphoserine is present on Ser124. Asp304, Arg305, Thr368, Glu387, Ser389, and Lys400 together coordinate alpha-D-glucose 1,6-bisphosphate.

The protein belongs to the phosphohexose mutase family. As to quaternary structure, monomer. It depends on Mg(2+) as a cofactor.

Its subcellular location is the cytoplasm. It carries out the reaction alpha-D-glucose 1-phosphate = alpha-D-glucose 6-phosphate. It catalyses the reaction O-phospho-L-seryl-[protein] + alpha-D-glucose 1-phosphate = alpha-D-glucose 1,6-bisphosphate + L-seryl-[protein]. The catalysed reaction is alpha-D-glucose 1,6-bisphosphate + L-seryl-[protein] = O-phospho-L-seryl-[protein] + alpha-D-glucose 6-phosphate. Catalyzes the reversible isomerization of alpha-D-glucose 1-phosphate to alpha-D-glucose 6-phosphate. The mechanism proceeds via the intermediate compound alpha-D-glucose 1,6-bisphosphate. This enzyme participates in both the breakdown and synthesis of glucose. This chain is Phosphoglucomutase, cytoplasmic (PGM1), found in Solanum tuberosum (Potato).